Reading from the N-terminus, the 131-residue chain is Profilin-4 (131 aa).

A disulfide bond links cysteine 13 and cysteine 115. The Involved in PIP2 interaction signature appears at 81–97; it reads VVIRGKKGTGGITIKKT. A Phosphothreonine modification is found at threonine 111.

The protein belongs to the profilin family. Occurs in many kinds of cells as a complex with monomeric actin in a 1:1 ratio. Phosphorylated by MAP kinases. In terms of tissue distribution, expressed predominantly in endosperm but is also found at low levels in all tissues examined, including mature and germinated pollen.

The protein localises to the cytoplasm. Its subcellular location is the cytoskeleton. In terms of biological role, binds to actin and affects the structure of the cytoskeleton. At high concentrations, profilin prevents the polymerization of actin, whereas it enhances it at low concentrations. By binding to PIP2, it inhibits the formation of IP3 and DG. Has a high affinity for poly-proline. This is Profilin-4 (PRO4) from Zea mays (Maize).